Here is a 327-residue protein sequence, read N- to C-terminus: Leucotoxin LukDv (327 aa).

Residues 1 to 26 (MKMKKLVKSSVASSIALLLLSNTVDA) form the signal peptide.

It belongs to the aerolysin family. As to quaternary structure, toxicity requires sequential binding and synergistic association of a class S and a class F component which form heterooligomeric complexes. LukEv (class S) associates with LukDv (class F).

The protein localises to the secreted. Part of a bi-component leucotoxin that acts by forming pores in the membrane of the target cells. The activity of LukEv-LukDv to rabbit leukocytes is similar to that of the Panton-Valentine leucocidin (PVL). LukEv-LukDv is hemolytic to rabbit red blood cells although the activity is only 8% of gamma-hemolysin. The protein is Leucotoxin LukDv (lukDv) of Staphylococcus aureus (strain NCTC 8325 / PS 47).